Reading from the N-terminus, the 1222-residue chain is A disintegrin and metalloproteinase with thrombospondin motifs 16 (1222 aa).

Positions 1 to 20 are cleaved as a signal peptide; that stretch reads MESRGCAALWVLLLAQVSEQ. Residues 21–277 constitute a propeptide that is removed on maturation; the sequence is QTPACALGLA…EYKPSSRHKR (257 aa). 2 N-linked (GlcNAc...) asparagine glycosylation sites follow: Asn154 and Asn190. A Cysteine switch motif is present at residues 245–253; sequence HFCGRRKKY. Cys247 provides a ligand contact to Zn(2+). Residues 288-493 form the Peptidase M12B domain; that stretch reads LNVETLVVVD…AQAICLADQP (206 aa). A glycan (N-linked (GlcNAc...) asparagine) is linked at Asn308. 11 disulfides stabilise this stretch: Cys364-Cys415, Cys390-Cys397, Cys409-Cys488, Cys448-Cys472, Cys516-Cys541, Cys527-Cys548, Cys536-Cys567, Cys561-Cys572, Cys596-Cys633, Cys600-Cys638, and Cys611-Cys623. Residue His431 coordinates Zn(2+). The active site involves Glu432. Residues His435 and His441 each coordinate Zn(2+). In terms of domain architecture, Disintegrin spans 494-583; that stretch reads KPVKEYKYPE…KYGDEGPKPT (90 aa). The region spanning 584–639 is the TSP type-1 1 domain; that stretch reads HGHWSDWSPWSPCSRTCGGGISHRDRLCTNPRPSHGGKFCQGSTRTLKLCNSQRCP. N-linked (GlcNAc...) asparagine glycosylation is found at Asn739, Asn778, Asn825, Asn833, Asn903, and Asn933. The tract at residues 745-871 is spacer; sequence THRGLYSKHH…KTPAAQPSYS (127 aa). TSP type-1 domains follow at residues 872 to 920, 925 to 985, 986 to 1046, 1049 to 1113, and 1125 to 1179; these read WAIV…LVPC, CPSS…QSCP, PAWS…KRCH, KKLQ…IPCP, and RGSW…HFCP. Residues 1184-1221 form the PLAC domain; that stretch reads RGTFCKDLFHWCYLVPQHGMCGHRFYSKQCCNTCSKSN.

Zn(2+) serves as cofactor. Post-translationally, the precursor is cleaved by a furin endopeptidase. Glycosylated. Can be O-fucosylated by POFUT2 on a serine or a threonine residue found within the consensus sequence C1-X(2)-(S/T)-C2-G of the TSP type-1 repeat domains where C1 and C2 are the first and second cysteine residue of the repeat, respectively. Fucosylated repeats can then be further glycosylated by the addition of a beta-1,3-glucose residue by the glucosyltransferase, B3GALTL. Fucosylation mediates the efficient secretion of ADAMTS family members. Can also be C-glycosylated with one or two mannose molecules on tryptophan residues within the consensus sequence W-X-X-W of the TPRs, and N-glycosylated. These other glycosylations can also facilitate secretion.

Its subcellular location is the secreted. It localises to the extracellular space. It is found in the extracellular matrix. The chain is A disintegrin and metalloproteinase with thrombospondin motifs 16 (Adamts16) from Mus musculus (Mouse).